A 348-amino-acid chain; its full sequence is Probable dual-specificity RNA methyltransferase RlmN (348 aa).

Glutamate 93 (proton acceptor) is an active-site residue. The 235-residue stretch at 99–333 (TEKRLTACLS…VSFRKSRGLD (235 aa)) folds into the Radical SAM core domain. A disulfide bridge links cysteine 106 with cysteine 338. The [4Fe-4S] cluster site is built by cysteine 113, cysteine 117, and cysteine 120. S-adenosyl-L-methionine-binding positions include 160-161 (GE), serine 190, 219-221 (SLH), and asparagine 295. Residue cysteine 338 is the S-methylcysteine intermediate of the active site.

This sequence belongs to the radical SAM superfamily. RlmN family. [4Fe-4S] cluster serves as cofactor.

The protein localises to the cytoplasm. The enzyme catalyses adenosine(2503) in 23S rRNA + 2 reduced [2Fe-2S]-[ferredoxin] + 2 S-adenosyl-L-methionine = 2-methyladenosine(2503) in 23S rRNA + 5'-deoxyadenosine + L-methionine + 2 oxidized [2Fe-2S]-[ferredoxin] + S-adenosyl-L-homocysteine. It catalyses the reaction adenosine(37) in tRNA + 2 reduced [2Fe-2S]-[ferredoxin] + 2 S-adenosyl-L-methionine = 2-methyladenosine(37) in tRNA + 5'-deoxyadenosine + L-methionine + 2 oxidized [2Fe-2S]-[ferredoxin] + S-adenosyl-L-homocysteine. In terms of biological role, specifically methylates position 2 of adenine 2503 in 23S rRNA and position 2 of adenine 37 in tRNAs. This Prochlorococcus marinus (strain MIT 9312) protein is Probable dual-specificity RNA methyltransferase RlmN.